The primary structure comprises 372 residues: Spermidine/putrescine import ATP-binding protein PotA (372 aa).

The region spanning 11-241 is the ABC transporter domain; that stretch reads IELRSITKSY…PANLFVARFI (231 aa). 43-50 lines the ATP pocket; sequence GPSGCGKT.

Belongs to the ABC transporter superfamily. Spermidine/putrescine importer (TC 3.A.1.11.1) family. As to quaternary structure, the complex is composed of two ATP-binding proteins (PotA), two transmembrane proteins (PotB and PotC) and a solute-binding protein (PotD).

It localises to the cell inner membrane. The enzyme catalyses ATP + H2O + polyamine-[polyamine-binding protein]Side 1 = ADP + phosphate + polyamineSide 2 + [polyamine-binding protein]Side 1.. In terms of biological role, part of the ABC transporter complex PotABCD involved in spermidine/putrescine import. Responsible for energy coupling to the transport system. This is Spermidine/putrescine import ATP-binding protein PotA from Aggregatibacter actinomycetemcomitans (Actinobacillus actinomycetemcomitans).